We begin with the raw amino-acid sequence, 491 residues long: Tryptophan 5-hydroxylase 2 (491 aa).

Phosphoserine is present on Ser19. A disordered region spans residues 33–63 (NLTVNKSNSGKNDDKKGNKGSSRSETAPDSG). Positions 66 to 141 (AVVFSLRNEV…TIVTLNPPEN (76 aa)) constitute an ACT domain. The Fe cation site is built by His319, His324, and Glu364.

Belongs to the biopterin-dependent aromatic amino acid hydroxylase family. In terms of assembly, interacts with DNAJC12. Requires Fe(2+) as cofactor.

It catalyses the reaction (6R)-L-erythro-5,6,7,8-tetrahydrobiopterin + L-tryptophan + O2 = 5-hydroxy-L-tryptophan + (4aS,6R)-4a-hydroxy-L-erythro-5,6,7,8-tetrahydrobiopterin. Its pathway is aromatic compound metabolism; serotonin biosynthesis; serotonin from L-tryptophan: step 1/2. This is Tryptophan 5-hydroxylase 2 (TPH2) from Equus caballus (Horse).